We begin with the raw amino-acid sequence, 69 residues long: NAD(P)H-quinone oxidoreductase subunit L (69 aa).

Transmembrane regions (helical) follow at residues 5–25 (LILL…ITYF) and 40–60 (GFMY…SPFL).

It belongs to the complex I NdhL subunit family. NDH-1 can be composed of about 15 different subunits; different subcomplexes with different compositions have been identified which probably have different functions.

The protein resides in the cellular thylakoid membrane. The catalysed reaction is a plastoquinone + NADH + (n+1) H(+)(in) = a plastoquinol + NAD(+) + n H(+)(out). It catalyses the reaction a plastoquinone + NADPH + (n+1) H(+)(in) = a plastoquinol + NADP(+) + n H(+)(out). NDH-1 shuttles electrons from an unknown electron donor, via FMN and iron-sulfur (Fe-S) centers, to quinones in the respiratory and/or the photosynthetic chain. The immediate electron acceptor for the enzyme in this species is believed to be plastoquinone. Couples the redox reaction to proton translocation, and thus conserves the redox energy in a proton gradient. Cyanobacterial NDH-1 also plays a role in inorganic carbon-concentration. This Acaryochloris marina (strain MBIC 11017) protein is NAD(P)H-quinone oxidoreductase subunit L.